The following is a 353-amino-acid chain: Protein pelota homolog (353 aa).

The protein belongs to the eukaryotic release factor 1 family. Pelota subfamily. Monomer. It depends on a divalent metal cation as a cofactor.

The protein resides in the cytoplasm. May function in recognizing stalled ribosomes, interact with stem-loop structures in stalled mRNA molecules, and effect endonucleolytic cleavage of the mRNA. May play a role in the release non-functional ribosomes and degradation of damaged mRNAs. Has endoribonuclease activity. The protein is Protein pelota homolog of Methanopyrus kandleri (strain AV19 / DSM 6324 / JCM 9639 / NBRC 100938).